We begin with the raw amino-acid sequence, 58 residues long: Small ribosomal subunit protein bS21 (58 aa).

The segment at 36 to 58 is disordered; it reads EFYEKPSVKRKRKSEAARKRKKF. A compositionally biased stretch (basic residues) spans 43-58; the sequence is VKRKRKSEAARKRKKF.

Belongs to the bacterial ribosomal protein bS21 family.

In Streptococcus uberis (strain ATCC BAA-854 / 0140J), this protein is Small ribosomal subunit protein bS21.